We begin with the raw amino-acid sequence, 66 residues long: Large ribosomal subunit protein uL29 (66 aa).

The protein belongs to the universal ribosomal protein uL29 family.

The polypeptide is Large ribosomal subunit protein uL29 (Rhizobium johnstonii (strain DSM 114642 / LMG 32736 / 3841) (Rhizobium leguminosarum bv. viciae)).